We begin with the raw amino-acid sequence, 286 residues long: ATP synthase gamma chain (286 aa).

This sequence belongs to the ATPase gamma chain family. As to quaternary structure, F-type ATPases have 2 components, CF(1) - the catalytic core - and CF(0) - the membrane proton channel. CF(1) has five subunits: alpha(3), beta(3), gamma(1), delta(1), epsilon(1). CF(0) has three main subunits: a, b and c.

It localises to the cell inner membrane. Its function is as follows. Produces ATP from ADP in the presence of a proton gradient across the membrane. The gamma chain is believed to be important in regulating ATPase activity and the flow of protons through the CF(0) complex. This Flavobacterium johnsoniae (strain ATCC 17061 / DSM 2064 / JCM 8514 / BCRC 14874 / CCUG 350202 / NBRC 14942 / NCIMB 11054 / UW101) (Cytophaga johnsonae) protein is ATP synthase gamma chain.